We begin with the raw amino-acid sequence, 420 residues long: Serine hydroxymethyltransferase (420 aa).

Residues leucine 121 and 125-127 each bind (6S)-5,6,7,8-tetrahydrofolate; that span reads GHL. Lysine 230 carries the N6-(pyridoxal phosphate)lysine modification. (6S)-5,6,7,8-tetrahydrofolate contacts are provided by residues glutamate 246 and 354 to 356; that span reads SPF.

It belongs to the SHMT family. Homodimer. Pyridoxal 5'-phosphate serves as cofactor.

The protein localises to the cytoplasm. The enzyme catalyses (6R)-5,10-methylene-5,6,7,8-tetrahydrofolate + glycine + H2O = (6S)-5,6,7,8-tetrahydrofolate + L-serine. The protein operates within one-carbon metabolism; tetrahydrofolate interconversion. Its pathway is amino-acid biosynthesis; glycine biosynthesis; glycine from L-serine: step 1/1. Its function is as follows. Catalyzes the reversible interconversion of serine and glycine with tetrahydrofolate (THF) serving as the one-carbon carrier. This reaction serves as the major source of one-carbon groups required for the biosynthesis of purines, thymidylate, methionine, and other important biomolecules. Also exhibits THF-independent aldolase activity toward beta-hydroxyamino acids, producing glycine and aldehydes, via a retro-aldol mechanism. The sequence is that of Serine hydroxymethyltransferase from Rickettsia typhi (strain ATCC VR-144 / Wilmington).